The sequence spans 195 residues: Large ribosomal subunit protein uL18 (195 aa).

It belongs to the universal ribosomal protein uL18 family. Part of the 50S ribosomal subunit. Contacts the 5S and 23S rRNAs.

Its function is as follows. This is one of the proteins that bind and probably mediate the attachment of the 5S RNA into the large ribosomal subunit, where it forms part of the central protuberance. The protein is Large ribosomal subunit protein uL18 of Korarchaeum cryptofilum (strain OPF8).